The chain runs to 220 residues: Peptide methionine sulfoxide reductase MsrA (220 aa).

C54 is a catalytic residue.

This sequence belongs to the MsrA Met sulfoxide reductase family.

The catalysed reaction is L-methionyl-[protein] + [thioredoxin]-disulfide + H2O = L-methionyl-(S)-S-oxide-[protein] + [thioredoxin]-dithiol. The enzyme catalyses [thioredoxin]-disulfide + L-methionine + H2O = L-methionine (S)-S-oxide + [thioredoxin]-dithiol. Its function is as follows. Has an important function as a repair enzyme for proteins that have been inactivated by oxidation. Catalyzes the reversible oxidation-reduction of methionine sulfoxide in proteins to methionine. The polypeptide is Peptide methionine sulfoxide reductase MsrA (Salinispora arenicola (strain CNS-205)).